The following is an 876-amino-acid chain: Radial spoke head 10 homolog B (876 aa).

Basic and acidic residues-rich tracts occupy residues Met1 to Ala16 and Pro57 to Gln66. Residues Met1–Gln72 form a disordered region. MORN repeat units follow at residues Tyr86–Thr108, Tyr109–Lys131, Tyr132–Thr154, Tyr155–Val177, Tyr179–Thr201, Tyr204–Ile226, Tyr227–Glu249, Tyr251–Ile273, Tyr284–Met306, and Tyr307–Val329. 2 disordered regions span residues Ser360 to Ser386 and Glu841 to Lys876. The span at Ala373–Ser386 shows a compositional bias: basic and acidic residues. Residues Glu752 to Glu841 adopt a coiled-coil conformation.

In terms of assembly, interacts with RSPH6A. Does not appear to be part of the axonemal radial spoke complexes 1 or 2.

The protein localises to the cytoplasm. Its subcellular location is the cytoskeleton. It localises to the cilium axoneme. It is found in the cell projection. The protein resides in the cilium. The protein localises to the flagellum. Its function is as follows. May function as part of the axonemal radial spoke complex 3 (RS3). Radial spoke complexes are important for ciliary motility. This Rattus norvegicus (Rat) protein is Radial spoke head 10 homolog B (Rsph10b).